The primary structure comprises 210 residues: Heart- and neural crest derivatives-expressed protein 2 (210 aa).

A disordered region spans residues 81 to 101 (SGAGGLMQRPVKRRGTANRKE). Residues 90–101 (PVKRRGTANRKE) show a composition bias toward basic residues. Residues 92-144 (KRRGTANRKERRRTISINSAFAELRECIPNVPADTKLSKIKTLRLATSYIAYL) form the bHLH domain.

Efficient DNA binding requires dimerization with another bHLH protein. As to expression, heart, liver and spleen.

Its subcellular location is the nucleus. Its function is as follows. Essential for cardiac morphogenesis and for the development of branchial arches. Binds DNA on E-box consensus sequence 5'-CANNTG-3'. The chain is Heart- and neural crest derivatives-expressed protein 2 (hand2) from Xenopus laevis (African clawed frog).